Consider the following 37-residue polypeptide: Large ribosomal subunit protein bL36B (37 aa).

The protein belongs to the bacterial ribosomal protein bL36 family.

The polypeptide is Large ribosomal subunit protein bL36B (Saccharopolyspora erythraea (strain ATCC 11635 / DSM 40517 / JCM 4748 / NBRC 13426 / NCIMB 8594 / NRRL 2338)).